Consider the following 152-residue polypeptide: UPF0266 membrane protein YobD (152 aa).

The next 3 membrane-spanning stretches (helical) occupy residues 6 to 26 (LVLI…QFIM), 45 to 65 (IDSV…VTNH), and 67 to 87 (ALIT…IFWI).

Belongs to the UPF0266 family.

It is found in the cell inner membrane. The chain is UPF0266 membrane protein YobD from Escherichia coli O45:K1 (strain S88 / ExPEC).